Consider the following 514-residue polypeptide: MSVLWMVLGLAIGIAVGAAAGYIVCRSRTDRRLAETRADARSIIEDANRQAETLRREAELAAKEAAMRIKDEAEAEVRARRAEISRIEERLDNRDTALDRREVELDERRRRLSETEDELRRREESLAEREQEQLRALEEISGLSRAEAEERLFSRVEAELERRIGRMVRNRISEAEENADLEARRILATTMERLASDLTSESTVKAVELPSDDMKGRVIGREGRNIRAFEAATGVDVIIDDTPETVVLSCFDPVRREVARIAMERLVKDGRIHPGRIEQVVAKVRKEVEKEMKAAGRQALYDAKVSGSMHGDLLRLLGALKYRSSYGQNVLAHSVEVANIAGMMAQELGANVKIARRAALLHDVGKAIDHEAEGTHALIGGRFAKKCGESDEVVRAISAHHHEVEMQTVEDVIVATADAVSAARPGARRETTEVYLERLRNLEDIALSHRGVDKAYAIQAGREIRVMVQPSEVDDRIAAKLAYDISRKIEDELEYPGQIKVTVIRESRVSEVAR.

A helical transmembrane segment spans residues 3–23; the sequence is VLWMVLGLAIGIAVGAAAGYI. Residues 203–266 form the KH domain; it reads TVKAVELPSD…EVARIAMERL (64 aa). Residues 330-423 form the HD domain; that stretch reads VLAHSVEVAN…VATADAVSAA (94 aa).

It belongs to the RNase Y family.

Its subcellular location is the cell membrane. Its function is as follows. Endoribonuclease that initiates mRNA decay. This Rubrobacter xylanophilus (strain DSM 9941 / JCM 11954 / NBRC 16129 / PRD-1) protein is Ribonuclease Y.